A 330-amino-acid polypeptide reads, in one-letter code: 4-hydroxythreonine-4-phosphate dehydrogenase (330 aa).

Substrate is bound by residues His135 and Thr136. A divalent metal cation contacts are provided by His165, His210, and His266. Residues Lys274, Asn283, and Arg292 each coordinate substrate.

This sequence belongs to the PdxA family. In terms of assembly, homodimer. Zn(2+) is required as a cofactor. Requires Mg(2+) as cofactor. The cofactor is Co(2+).

It is found in the cytoplasm. It carries out the reaction 4-(phosphooxy)-L-threonine + NAD(+) = 3-amino-2-oxopropyl phosphate + CO2 + NADH. The protein operates within cofactor biosynthesis; pyridoxine 5'-phosphate biosynthesis; pyridoxine 5'-phosphate from D-erythrose 4-phosphate: step 4/5. Its function is as follows. Catalyzes the NAD(P)-dependent oxidation of 4-(phosphooxy)-L-threonine (HTP) into 2-amino-3-oxo-4-(phosphooxy)butyric acid which spontaneously decarboxylates to form 3-amino-2-oxopropyl phosphate (AHAP). This is 4-hydroxythreonine-4-phosphate dehydrogenase from Vibrio cholerae serotype O1 (strain ATCC 39315 / El Tor Inaba N16961).